Reading from the N-terminus, the 109-residue chain is RYamide neuropeptides (109 aa).

The first 22 residues, 1 to 22, serve as a signal peptide directing secretion; that stretch reads MNECVNKLLHLKFLFYFILGIQ. A Tyrosine amide modification is found at Tyr33. The propeptide occupies 36–53; sequence STTYDESLKSRRIFIVPR. Tyr63 is modified (tyrosine amide). The propeptide occupies 67–109; it reads SGKYLCLSREINKLIVRKRLRNNDKERTPTLSFITKHFLMRNT.

The protein localises to the secreted. Neuropeptides RYamide-1 and RYamide-2 are ligands for the G-protein coupled receptor RYa-R. May suppress feeding behavior. This chain is RYamide neuropeptides, found in Drosophila melanogaster (Fruit fly).